The chain runs to 321 residues: Probable arabinan endo-1,5-alpha-L-arabinosidase A (321 aa).

An N-terminal signal peptide occupies residues 1–19 (MSASVFVVVASCLAALAHG). The Proton acceptor role is filled by Asp-34. The active-site Proton donor is Glu-200.

Belongs to the glycosyl hydrolase 43 family.

The protein resides in the secreted. The enzyme catalyses Endohydrolysis of (1-&gt;5)-alpha-arabinofuranosidic linkages in (1-&gt;5)-arabinans.. The protein operates within glycan metabolism; L-arabinan degradation. In terms of biological role, endo-1,5-alpha-L-arabinanase involved in degradation of pectin. Its preferred substrate is linear 1,5-alpha-L-arabinan. The protein is Probable arabinan endo-1,5-alpha-L-arabinosidase A (abnA) of Aspergillus fumigatus (strain ATCC MYA-4609 / CBS 101355 / FGSC A1100 / Af293) (Neosartorya fumigata).